The sequence spans 858 residues: Volume-regulated anion channel subunit LRRC8D (858 aa).

The Cytoplasmic portion of the chain corresponds to 1-22 (MFTLAEVASLNDIQPTYRILKP). A helical transmembrane segment spans residues 23–48 (WWDVFMDYLAVVMLMVAIFAGTMQLT). Residues 49–163 (KDQVVCLPVL…YHLALPWYSK (115 aa)) lie on the Extracellular side of the membrane. The cysteines at positions 54 and 354 are disulfide-linked. The interval 118–137 (AESTFPSQETKKEKRDPTGR) is disordered. Residues 126–137 (ETKKEKRDPTGR) show a composition bias toward basic and acidic residues. The chain crosses the membrane as a helical span at residues 164–182 (YFPYLALIHTIILMVSSNF). Residues 183-308 (WFKYPKTCSK…EDSDLIYKLY (126 aa)) lie on the Cytoplasmic side of the membrane. Residues 221–251 (SEENKQRITGAQTLPKHVSTSSDEGSPSAST) form a disordered region. Over residues 227–251 (RITGAQTLPKHVSTSSDEGSPSAST) the composition is skewed to polar residues. 3 positions are modified to phosphoserine: S241, S242, and S246. The helical transmembrane segment at 309–330 (VVQTLIKTAKFIFILCYTANFV) threads the bilayer. The Extracellular segment spans residues 331 to 360 (NAISFEHVCKPKVEHLTGYEVFECTHNMAY). Residues 361-386 (MLKKLLISYISIICVYGFICLYTLFW) form a helical membrane-spanning segment. Residues 387–858 (LFRIPLKEYS…DVNVPFANGI (472 aa)) lie on the Cytoplasmic side of the membrane. LRR repeat units follow at residues 514–534 (NLQE…AFSF), 538–559 (HLRC…VYLL), 561–582 (NLRE…IGLE), 589–609 (HLKI…ITDV), 612–632 (HLTK…NSLK), 636–657 (NVAE…IFSL), 659–680 (NLQE…ISFQ), 684–705 (RLTC…ITHV), 707–728 (NLES…VFSL), 730–751 (KLRC…IGLL), 753–774 (NLQH…LFKC), 776–797 (KLRT…ISQL), and 799–820 (QLTQ…LGQC).

The protein belongs to the LRRC8 family. As to quaternary structure, heterohexamer; oligomerizes with other LRRC8 proteins (LRRC8A, LRRC8B, LRRC8C and/or LRRC8E) to form a heterohexamer. In vivo, the subunit composition may depend primarily on expression levels, and heterooligomeric channels containing various proportions of the different LRRC8 proteins may coexist.

Its subcellular location is the cell membrane. The protein resides in the endoplasmic reticulum membrane. It carries out the reaction chloride(in) = chloride(out). The catalysed reaction is iodide(out) = iodide(in). It catalyses the reaction taurine(out) = taurine(in). In terms of biological role, non-essential component of the volume-regulated anion channel (VRAC, also named VSOAC channel), an anion channel required to maintain a constant cell volume in response to extracellular or intracellular osmotic changes. The VRAC channel conducts iodide better than chloride and can also conduct organic osmolytes like taurine. Plays a redundant role in the efflux of amino acids, such as aspartate, in response to osmotic stress. Channel activity requires LRRC8A plus at least one other family member (LRRC8B, LRRC8C, LRRC8D or LRRC8E); channel characteristics depend on the precise subunit composition. Also acts as a regulator of glucose-sensing in pancreatic beta cells: VRAC currents, generated in response to hypotonicity- or glucose-induced beta cell swelling, depolarize cells, thereby causing electrical excitation, leading to increase glucose sensitivity and insulin secretion. VRAC channels containing LRRC8D inhibit transport of immunoreactive cyclic dinucleotide GMP-AMP (2'-3'-cGAMP), an immune messenger produced in response to DNA virus in the cytosol. The chain is Volume-regulated anion channel subunit LRRC8D from Rattus norvegicus (Rat).